Reading from the N-terminus, the 96-residue chain is RING finger protein Z (96 aa).

The span at 1–10 (MGNCRSKQES) shows a compositional bias: basic and acidic residues. Residues 1–21 (MGNCRSKQESHPICPNTQTPE) form a disordered region. Residue glycine 2 is the site of N-myristoyl glycine; by host attachment. The RING-type; atypical zinc finger occupies 41 to 77 (CKCCWFADRNLINCSDHYLCLRCLNVMLRTSNLCNIC). Positions 91-94 (PTAP) match the PTAP/PSAP motif motif.

This sequence belongs to the arenaviridae Z protein family. Interacts with protein NP; this interaction probably directs the encapsidated genome to budding sites. Interacts (via RING domain) with polymerase L; this interaction inhibits viral transcription and replication, Z partially blocks the product exit tunnel for the releasing nascent RNA product. Interacts with the glycoprotein complex; this interaction plays a role in virion budding. Interacts with host eIF4E; this interaction results in eIF4E reduced affinity for its substrate, the 5'-m7 G cap structure. Interacts (via late-budding domain) with host TSG101; this interaction is essential for budding and release of viral particles. Interacts with host RPLP0; this interaction may serve to load ribosome-like particles inside the virion. Interacts with host PML; this interaction induces PML bodies redistribution in the cytoplasm upon viral infection. In terms of processing, myristoylation is required for the role of RING finger protein Z in assembly and budding.

The protein localises to the virion. Its subcellular location is the host cytoplasm. It is found in the host perinuclear region. The protein resides in the host cell membrane. Plays a crucial role in virion assembly and budding. Expressed late in the virus life cycle, it acts as an inhibitor of viral transcription and RNA synthesis by interacting with the viral polymerase L. Presumably recruits the NP encapsidated genome to cellular membranes at budding sites via direct interaction with NP. Plays critical roles in the final steps of viral release by interacting with host TSG101, a member of the vacuolar protein-sorting pathway and using other cellular host proteins involved in vesicle formation pathway. The budding of the virus progeny occurs after association of protein Z with the viral glycoprotein complex SSP-GP1-GP2 at the cell periphery, step that requires myristoylation of protein Z. Also selectively represses protein production by associating with host eIF4E. In cell-based minigenome assay, has an inhibitory effect on the ribonucleoprotein machinery (vRNP), which is responsible for the replication and transcription of the viral genome. This is RING finger protein Z from Hylaeamys megacephalus (Large-headed rice rat).